We begin with the raw amino-acid sequence, 179 residues long: MKFSLFFGVLFLAILHSCLSESEKDLTDEDHFRSSDSFLSEIQEESRGKKCIERNKECTNDRHGCCRGKIFKDKCECVGSGGKERCVCKQKKWAKIIESYIGDIPTLPKPEDDKCVPKHEDCSERKNDCCKSGLFTLKCKCYDMQDDEDGKKTELCGCVQPFEHKAIEQALRFGKWMVG.

A signal peptide spans 1–20 (MKFSLFFGVLFLAILHSCLS). Residues 21–47 (ESEKDLTDEDHFRSSDSFLSEIQEESR) constitute a propeptide that is removed on maturation. Residues 44–47 (EESR) carry the Processing quadruplet motif motif. Cystine bridges form between Cys-51/Cys-66, Cys-58/Cys-75, Cys-65/Cys-88, Cys-77/Cys-86, Cys-115/Cys-130, Cys-122/Cys-139, Cys-129/Cys-158, and Cys-141/Cys-156. A Valine amide modification is found at Val-178.

The protein belongs to the spider toxin CSTX family. Double-CSTX subfamily. Post-translationally, cleavage of the propeptide depends on the processing quadruplet motif (XXXR, with at least one of X being E). As to expression, expressed by the venom gland.

The protein resides in the secreted. Its function is as follows. Spider venom toxin that exhibits cytolytic activity by forming an alpha-helix across the membrane. Lethal to insect larvae. This is DELTA-miturgitoxin-Cp2a from Cheiracanthium punctorium (Yellow sac spider).